The chain runs to 143 residues: Transcriptional regulator MraZ (143 aa).

SpoVT-AbrB domains are found at residues 5 to 47 and 76 to 119; these read EYSH…PMAV and ALEA…SAEN.

It belongs to the MraZ family. Forms oligomers.

The protein localises to the cytoplasm. It localises to the nucleoid. The protein is Transcriptional regulator MraZ of Leuconostoc mesenteroides subsp. mesenteroides (strain ATCC 8293 / DSM 20343 / BCRC 11652 / CCM 1803 / JCM 6124 / NCDO 523 / NBRC 100496 / NCIMB 8023 / NCTC 12954 / NRRL B-1118 / 37Y).